The following is a 361-amino-acid chain: Peptide chain release factor 1 (361 aa).

Gln237 is subject to N5-methylglutamine. Positions 285–306 (QAEQSAQQTEQRRQLVGSGDRS) are disordered.

This sequence belongs to the prokaryotic/mitochondrial release factor family. Post-translationally, methylated by PrmC. Methylation increases the termination efficiency of RF1.

Its subcellular location is the cytoplasm. Its function is as follows. Peptide chain release factor 1 directs the termination of translation in response to the peptide chain termination codons UAG and UAA. The sequence is that of Peptide chain release factor 1 from Alkalilimnicola ehrlichii (strain ATCC BAA-1101 / DSM 17681 / MLHE-1).